A 1128-amino-acid chain; its full sequence is MASEEASLRALESLMTEFFHSCTTNDRKREIEELLNSFAGQPGSWRHWLYFLSNSRNEYVMMYSLTVFENLVNKMWVGVASEDKAELRSCLPKLLLSQHALLPFFIRNKLCKVIVDIGRQDWPMFYHDFFSNTLQLVQSPSLASLGLVLLKMTSEELVCPREDLSVARKDELKKLLLDQIPTVLNLLTRILETVWDKHSVTVTTPPPSPTSRESGVMLGDSTPMVLDAESGALCLLALECLAHLFSWIPLSSSITPSLLASIFHFARFGCQQPIKTKPLPTSNGDSAPGSLPANGGGHCRTGQIVGHAERARLGVMAMNCINELMCKNCVPVDFEEFLLRMFQQTFYLLQRLTNTHSHTNTHTIKSRLQDLDESYVEKFTDFLRLFVSVHLRRIESNAQFPLVEFLALLFKYTFNQPSHEGYLACLDIWSVFLDYLTTKIRSRLADRDSVINRYKDALVLLLREVLNRIQFRLNQSQLEELDDETLDDDQQTEWQRYLRQSLEVVARVMELLPSQTFSVLFPVLQEDLDVYLGLQQFIVRSGTSRRLNITAEADCRKLHCALRDLSSLLQAVGRLAEFFTGDVFTARFNDALAIVQRLVEVSCYGSQISLYDVEMAVPSVLKPDLIDVHAQSLAALQAYSHWLAQFCGEVQRQQDQTQFVDLITSSMAAASPLINGKVPEKLLLSACHLLVSMATTVRPVFLVSLPAVQNIFNLITENHNHRLPQEAHVLVCRALSNMLLLPWPSLPEGEQQWPNRSANHARLISSLTQQYRLLPRPPNHHHTSKAVIQQTLCVLRDLVDSISGEATKSRQICYHSLQESVQVSLALFPLFIQQPEVTDEMLSFFLTLFQALRVQMGVAFTEQIIQTFLSMFTREQLAVGILQEGSSGSKVVQKFLKILQVVVQEPGQTFKPLLPSILSLCLDQVYPIVAERSCPDVRAEMFELLFQILHQNWRFFFKSSVLSSVQRSGAEELMENQAQFTAAMQAFGQSFLQPDIHIFKQNLSYLEVLNTKHKLYHRKLFRNAMLFHFINVLLQVLLHKSHDLLQEDITLALYNMAAVDFSAFYSSFLPEFLNGCQGLDPHQRTTLARNFTPERDLPSFSQGVYRIVNDLRFYRLCNGSLPPGTLKL.

Residues 31 to 97 form the Importin N-terminal domain; that stretch reads IEELLNSFAG…RSCLPKLLLS (67 aa).

This sequence belongs to the exportin family.

Its subcellular location is the nucleus. The protein resides in the cytoplasm. Functionally, mediates the nuclear export of actin and profilin-actin complexes in somatic cells. The polypeptide is Exportin-6 (xpo6) (Danio rerio (Zebrafish)).